A 102-amino-acid polypeptide reads, in one-letter code: Putative defensin-like protein 152 (102 aa).

A signal peptide spans 1–29 (MKKASQLSTTILTIFIVLAIGMMVKGTVG). 4 disulfides stabilise this stretch: C34/C93, C51/C71, C56/C87, and C60/C89.

The protein belongs to the DEFL family.

It is found in the secreted. In Arabidopsis thaliana (Mouse-ear cress), this protein is Putative defensin-like protein 152 (LCR11).